We begin with the raw amino-acid sequence, 477 residues long: MPIKNNSKNEKKIYFVIGLGRSGFWAAKYLRSLGKKVIVWESNENEELSETKEILEKLDISVCLNKQFLFEEFSECLNQIEAVVISPAIPIDHKTIIKLKEKGIEVLGEVNIAWESLKNINWIGITGTNGKTTVTHLLSHILRTNNLLAPFAGNIGTPLCKIAYSIKSKNIDWLVAELSSYQIEIATLCIKPKIGIWTTFTADHLDRHKTLDNYFKIKNSLLKQSEFRIYNYDDIHLRENFKSLSKGIWITTSSKQSDLDHCDYWINNEDFIVERQENLLSLKNFKLKGNHNTQNLLLAIAAARKIGLSPEKIKNALLSYEQLPHRMETIYQSNKLEIINDSKATNFDSSTAGIKAIKGAPIIISGGKLKSGSYIEWVNIINKKAKAVFLFGESSQTLKKLILEGGFKKDIFIFNDLSEVINYVYSYIENNQIETLLFSPSCSSFDQFRNYEERGDIFKKLIHEKFNLKLFAHKEFS.

127–133 serves as a coordination point for ATP; the sequence is GTNGKTT.

Belongs to the MurCDEF family.

It localises to the cytoplasm. The catalysed reaction is UDP-N-acetyl-alpha-D-muramoyl-L-alanine + D-glutamate + ATP = UDP-N-acetyl-alpha-D-muramoyl-L-alanyl-D-glutamate + ADP + phosphate + H(+). It participates in cell wall biogenesis; peptidoglycan biosynthesis. Functionally, cell wall formation. Catalyzes the addition of glutamate to the nucleotide precursor UDP-N-acetylmuramoyl-L-alanine (UMA). The sequence is that of UDP-N-acetylmuramoylalanine--D-glutamate ligase from Prochlorococcus marinus (strain MIT 9515).